The sequence spans 235 residues: Serine protease SplA (235 aa).

An N-terminal signal peptide occupies residues 1-35 (MNENVMVKGLTALTILTSLGFAENISNQPHSIAKA). Active-site charge relay system residues include histidine 74, aspartate 113, and serine 189.

This sequence belongs to the peptidase S1B family.

The protein resides in the secreted. The sequence is that of Serine protease SplA (splA) from Staphylococcus aureus (strain MSSA476).